Reading from the N-terminus, the 63-residue chain is Large ribosomal subunit protein bL28 (63 aa).

Positions 1–21 are disordered; the sequence is MSRRDDLTGKGPMFGNNRSHA.

It belongs to the bacterial ribosomal protein bL28 family.

The protein is Large ribosomal subunit protein bL28 of Mycoplasmopsis pulmonis (strain UAB CTIP) (Mycoplasma pulmonis).